A 412-amino-acid chain; its full sequence is Branched-chain alpha-ketoacid dehydrogenase kinase (412 aa).

The transit peptide at 1–30 (MILTSVLGSGPRSWSSLWPLLGSSLSLRAR) directs the protein to the mitochondrion. Ser31 carries the phosphoserine modification. Ser52 carries the phosphoserine; by autocatalysis modification. One can recognise a Histidine kinase domain in the interval 159-404 (LDDHKDVVTL…DVYLRLRHID (246 aa)). Residues Lys192 and Lys233 each carry the N6-acetyllysine modification. 2 residues coordinate ATP: Asn279 and Asp315. Residue Asn279 coordinates Mg(2+). K(+)-binding residues include Val328, Asp330, and Phe333. Residues Thr334 and Thr335 each coordinate ATP. A phosphoserine mark is found at Ser356 and Ser360. The ATP site is built by His364, Gly367, and Leu370. A K(+)-binding site is contributed by Gly367.

This sequence belongs to the PDK/BCKDK protein kinase family. As to quaternary structure, homodimer. Homotetramer. Dimerizes through interaction of two opposing nucleotide-binding domains. Interacts with E2 component of the branched-chain alpha-ketoacid dehydrogenase (BCKDH) complex. Competes with BCKDK for binding to the E2 component; this interaction is modulated by branched-chain alpha-keto acids. At steady state, BCKDH holoenzyme contains BCKDK and BCKDHA is phosphorylated. In response to high levels of branched-chain alpha-keto acids, the inhibitory BCKDK is replaced by activating PPM1K leading to BCKDHA dephosphorylation and BCAA degradation. Autophosphorylated. In terms of tissue distribution, ubiquitous.

It localises to the mitochondrion matrix. Its subcellular location is the mitochondrion. It catalyses the reaction L-seryl-[3-methyl-2-oxobutanoate dehydrogenase] + ATP = O-phospho-L-seryl-[3-methyl-2-oxobutanoate dehydrogenase] + ADP + H(+). The enzyme catalyses L-seryl-[protein] + ATP = O-phospho-L-seryl-[protein] + ADP + H(+). In terms of biological role, serine/threonine-protein kinase component of macronutrients metabolism. Forms a functional kinase and phosphatase pair with PPM1K, serving as a metabolic regulatory node that coordinates branched-chain amino acids (BCAAs) with glucose and lipid metabolism via two distinct phosphoprotein targets: mitochondrial BCKDHA subunit of the branched-chain alpha-ketoacid dehydrogenase (BCKDH) complex and cytosolic ACLY, a lipogenic enzyme of Krebs cycle. Phosphorylates and inactivates mitochondrial BCKDH complex a multisubunit complex consisting of three multimeric components each involved in different steps of BCAA catabolism: E1 composed of BCKDHA and BCKDHB, E2 core composed of DBT monomers, and E3 composed of DLD monomers. Associates with the E2 component of BCKDH complex and phosphorylates BCKDHA on Ser-334, leading to conformational changes that interrupt substrate channeling between E1 and E2 and inactivates the BCKDH complex. Phosphorylates ACLY on Ser-455 in response to changes in cellular carbohydrate abundance such as occurs during fasting to feeding metabolic transition. Refeeding stimulates MLXIPL/ChREBP transcription factor, leading to increased BCKDK to PPM1K expression ratio, phosphorylation and activation of ACLY that ultimately results in the generation of malonyl-CoA and oxaloacetate immediate substrates of de novo lipogenesis and glucogenesis, respectively. Recognizes phosphosites having SxxE/D canonical motif. The polypeptide is Branched-chain alpha-ketoacid dehydrogenase kinase (Bckdk) (Mus musculus (Mouse)).